A 279-amino-acid chain; its full sequence is Urease accessory protein UreD (279 aa).

This sequence belongs to the UreD family. In terms of assembly, ureD, UreF and UreG form a complex that acts as a GTP-hydrolysis-dependent molecular chaperone, activating the urease apoprotein by helping to assemble the nickel containing metallocenter of UreC. The UreE protein probably delivers the nickel.

It localises to the cytoplasm. In terms of biological role, required for maturation of urease via the functional incorporation of the urease nickel metallocenter. The sequence is that of Urease accessory protein UreD from Rhodopseudomonas palustris (strain HaA2).